Reading from the N-terminus, the 883-residue chain is Aldehyde-alcohol dehydrogenase (883 aa).

The interval Lys13–Asn456 is aldehyde dehydrogenase. Residues Ile121–Asn126, Gly206, and Gly224 contribute to the NAD(+) site. The active-site Nucleophile is the Cys257. Residues Glu355, Leu435, and Gly438–Asn443 each bind NAD(+). Positions Ile457–Arg464 are linker. Residues Asp500, Asp534, Gly561–Asp565, Thr612–Thr613, Val625, Lys634, and Leu653 each bind NAD(+). Positions 668, 672, 736, and 750 each coordinate Fe cation.

This sequence in the N-terminal section; belongs to the aldehyde dehydrogenase family. In the C-terminal section; belongs to the iron-containing alcohol dehydrogenase family. It depends on Fe(2+) as a cofactor.

The catalysed reaction is an aldehyde + NAD(+) + H2O = a carboxylate + NADH + 2 H(+). The enzyme catalyses ethanol + NAD(+) = acetaldehyde + NADH + H(+). Its function is as follows. Has alcohol dehydrogenase activity. Has aldehyde dehydrogenase activity. Plays a role in enhancing virulence in mice, under ethanol stress conditions, perhaps by inducing expression of pneumolysin (Ply) and increasing production of hydrogen peroxide H(2)O(2). May be considered a potential virulence factor. The sequence is that of Aldehyde-alcohol dehydrogenase from Streptococcus pneumoniae serotype 2 (strain D39 / NCTC 7466).